Here is a 65-residue protein sequence, read N- to C-terminus: Large ribosomal subunit protein bL35 (65 aa).

The disordered stretch occupies residues 1–23 (MPKMKTHRGAAKRFKKTGTGKLK).

This sequence belongs to the bacterial ribosomal protein bL35 family.

The protein is Large ribosomal subunit protein bL35 of Clostridium perfringens (strain ATCC 13124 / DSM 756 / JCM 1290 / NCIMB 6125 / NCTC 8237 / Type A).